Consider the following 283-residue polypeptide: Probable endonuclease 4 (283 aa).

Positions 69, 109, 145, 179, 182, 216, 229, 231, and 261 each coordinate Zn(2+).

Belongs to the AP endonuclease 2 family. The cofactor is Zn(2+).

It catalyses the reaction Endonucleolytic cleavage to 5'-phosphooligonucleotide end-products.. Its function is as follows. Endonuclease IV plays a role in DNA repair. It cleaves phosphodiester bonds at apurinic or apyrimidinic (AP) sites, generating a 3'-hydroxyl group and a 5'-terminal sugar phosphate. This Campylobacter curvus (strain 525.92) protein is Probable endonuclease 4.